The primary structure comprises 330 residues: D-cysteine desulfhydrase (330 aa).

Residue K52 is modified to N6-(pyridoxal phosphate)lysine.

This sequence belongs to the ACC deaminase/D-cysteine desulfhydrase family. In terms of assembly, homodimer. The cofactor is pyridoxal 5'-phosphate.

The enzyme catalyses D-cysteine + H2O = hydrogen sulfide + pyruvate + NH4(+) + H(+). Its function is as follows. Catalyzes the alpha,beta-elimination reaction of D-cysteine and of several D-cysteine derivatives. It could be a defense mechanism against D-cysteine. The chain is D-cysteine desulfhydrase from Yersinia enterocolitica serotype O:8 / biotype 1B (strain NCTC 13174 / 8081).